Reading from the N-terminus, the 612-residue chain is Cryptochrome-2 (612 aa).

Residues 1 to 485 (MKMDKKTIVW…TARELLAKAI (485 aa)) form a CNT2, binds chromophores to sense blue light and mediate CRY dimerization region. The 130-residue stretch at 5 to 134 (KKTIVWFRRD…SVQSYNGDLL (130 aa)) folds into the Photolyase/cryptochrome alpha/beta domain. FAD is bound at residue Tyr-232. Mg(2+)-binding residues include Asn-235 and Ser-243. Position 244–248 (244–248 (TSLLS)) interacts with FAD. A Mg(2+)-binding site is contributed by His-355. Residues Asn-356 and 387-389 (DAD) each bind FAD. Residue 356–357 (NR) participates in ATP binding. Position 406 (Asp-406) interacts with ATP. Residues 486–612 (SRTREAQIMI…TTSLGKNGCK (127 aa)) are CCT2/CCE2, mediates blue light signaling. A disordered region spans residues 539–576 (GSKRVKPEEEEERDMKKSRGFDERELFSTAESSSSSSV). Positions 541 to 555 (KRVKPEEEEERDMKK) match the Nuclear localization signal motif. Residues 551-564 (RDMKKSRGFDEREL) show a composition bias toward basic and acidic residues. Ser-587 is modified (phosphoserine; by CK1). Residues 590 to 612 (KNLEGIQDSSDQITTSLGKNGCK) form a disordered region. A compositionally biased stretch (polar residues) spans 596–612 (QDSSDQITTSLGKNGCK). A phosphoserine mark is found at Ser-598 and Ser-599. Thr-603 carries the post-translational modification Phosphothreonine; by CK1. Ser-605 carries the post-translational modification Phosphoserine.

The protein belongs to the DNA photolyase class-1 family. As to quaternary structure, homodimer. Blue-light dependent dimerization. Interacts with COP1 and PHYB in the nucleus. Binds reversibly to CIBs proteins such as BHLH63/CIB1, BHLH78/CIB2, BHLH74/CIB4 and BHLH76/CIB5 after blue light illumination to stimulate their transcription factor activities. Interacts with PIF4 and PIF5 in the nucleus in response to low blue light (LBL). Binds to SPA1 in response to blue light, this interaction prevents SPA1/COP1 complex formation but stimulates interaction with COP1, and thus avoid COP1-dependent degradation of the transcription factors CO and HY5 by the proteasome and promotes hypocotyl elongation and floral initiation. Binding to ATP mediates conformational changes which facilitate flavin binding. Interacts with BIC1 in both darkness and light. Interacts with NRP. The cofactor is FAD. Requires (6R)-5,10-methylene-5,6,7,8-tetrahydrofolate as cofactor. Phosphorylated by CK1.3 and CK1.4; in response to blue light. Required for degradation. Adopts an open conformation when phosphorylated upon photoexcitation and thus interacts with signaling partner proteins. Not autophosphorylated, even in complex with FAD cofactor. Post-translationally, ubiquitinated; in response to blue light. As to expression, mostly expressed in the shoot meristems and root tips, and, to a lower extent, in the cotyledons, hypocotyls, and roots.

Its subcellular location is the nucleus. The protein localises to the PML body. The protein resides in the cytoplasm. Functionally, photoreceptor that mediates primarily blue light inhibition of hypocotyl elongation and photoperiodic control of floral initiation, and regulates other light responses, including circadian rhythms, tropic growth, stomata opening, guard cell development, root development, bacterial and viral pathogen responses, abiotic stress responses, cell cycles, programmed cell death, apical dominance, fruit and ovule development, seed dormancy, and magnetoreception. Photoexcited cryptochromes interact with signaling partner proteins to alter gene expression at both transcriptional and post-translational levels and, consequently, regulate the corresponding metabolic and developmental programs. Blue-light absorbing flavoprotein that activates reversible flavin photoreduction via an electron transport chain comprising a tryptophan triad (W-321, W-374 and W-397), or via an alternative electron transport that involves small metabolites, including NADPH, NADH, and ATP. The half-life of the activated signaling state is about 16 minutes. Perceives low blue light (LBL) and responds by directly contacting two bHLH transcription factors, PIF4 and PIF5, at chromatin on E-box variant 5'-CA[CT]GTG-3' to promote their activity and stimulate specific gene expression to adapt global physiology (e.g. hypocotyl elongation and hyponastic growth in low blue light). In response to blue light, binds to CIB proteins (e.g. BHLH63/CIB1 and BHLH76/CIB5) to activate transcription and floral initiation. Mediates blue light-induced gene expression, floral initiation and hypocotyl elongation through the interaction with SPA1 that prevents formation of SPA1/COP1 complex but stimulates COP1 binding, and thus inhibits COP1-mediated degradation of transcription factors (e.g. CO and HY5). Promotes flowering time in continuous light (LL). Involved in shortening the circadian clock period, especially at 27 degrees Celsius, in blue light (BL). Required to maintain clock genes expression rhythm. Triggers nuclear accumulation of ROS in response to blue light illumination. Involved in blue light-dependent stomatal opening, transpiration and inhibition of stem and root growth, probably by regulating abscisic acid (ABA). Regulates the timing of flowering by promoting the expression of 'FLOWERING LOCUS T' (FT) in vascular bundles. Negatively regulated by 'FLOWERING LOCUS C' (FLC). General positive regulator of reversible low light-induced chromatin decompaction. Involved in triggering chromatin decondensation during floral transition. Together with phototropins, involved in phototropism regulation by various blue light fluence; blue light attenuates phototropism in high fluence rates (100 umol.m-2.s-1) but enhances phototropism in low fluence rates (&lt;1.0 umol.m-2.s-1). The effect of near-null magnetic field on flowering is altered by changes of blue light cycle and intensity in a CRY1/CRY2-dependent manner. Involved in the strigolactone signaling that regulates hypocotyl growth in response to blue light. Its function is as follows. Confers resistance to turnip crinkle virus (TCV) by preventing COP1-mediated proteasome-mediated degradation of RPP8/HRT, thus promoting its stability in light. Exposure to darkness or blue-light induces degradation of CRY2, and in turn of RPP8/HRT, resulting in susceptibility to TCV. The polypeptide is Cryptochrome-2 (Arabidopsis thaliana (Mouse-ear cress)).